We begin with the raw amino-acid sequence, 125 residues long: MLWQGKSVRKATGGRYHASRGKKRFEIGRSPADTIIGTTRVKTIRVTGGNTKVRALRCEFANVSDKKTGKVQKVKINSVAENAANPNYVRRNLMTKGAIITTELGKAQIVSRPGQDGVINAVLIE.

The protein belongs to the eukaryotic ribosomal protein eS8 family. In terms of assembly, part of the 30S ribosomal subunit.

In Methanocorpusculum labreanum (strain ATCC 43576 / DSM 4855 / Z), this protein is Small ribosomal subunit protein eS8.